The primary structure comprises 760 residues: Catalase-peroxidase (760 aa).

Residues 1–45 (MKGTPFRSPHLYQEGSSCMHRTIRSVAAVLTVVLSATIPMVPAWS) form the signal peptide. Residues 124–245 (WHGAGTYRTY…LAATQMGLIY (122 aa)) constitute a cross-link (tryptophyl-tyrosyl-methioninium (Trp-Tyr) (with M-271)). The active-site Proton acceptor is His125. Positions 245–271 (YVNPEGPNGVPDPVAAARDIREAFGGM) form a cross-link, tryptophyl-tyrosyl-methioninium (Tyr-Met) (with W-124). His286 lines the heme b pocket.

The protein belongs to the peroxidase family. Peroxidase/catalase subfamily. In terms of assembly, homodimer or homotetramer. Heme b serves as cofactor. Post-translationally, formation of the three residue Trp-Tyr-Met cross-link is important for the catalase, but not the peroxidase activity of the enzyme.

The catalysed reaction is H2O2 + AH2 = A + 2 H2O. It catalyses the reaction 2 H2O2 = O2 + 2 H2O. Bifunctional enzyme with both catalase and broad-spectrum peroxidase activity. This Granulibacter bethesdensis (strain ATCC BAA-1260 / CGDNIH1) protein is Catalase-peroxidase.